The following is a 278-amino-acid chain: Purine nucleoside phosphorylase YlmD (278 aa).

Zn(2+)-binding residues include His-87, Cys-132, and His-149.

The protein belongs to the purine nucleoside phosphorylase YfiH/LACC1 family. As to quaternary structure, homodimer. The cofactor is Cu(2+). Requires Zn(2+) as cofactor.

It carries out the reaction adenosine + phosphate = alpha-D-ribose 1-phosphate + adenine. The catalysed reaction is S-methyl-5'-thioadenosine + phosphate = 5-(methylsulfanyl)-alpha-D-ribose 1-phosphate + adenine. The enzyme catalyses inosine + phosphate = alpha-D-ribose 1-phosphate + hypoxanthine. It catalyses the reaction adenosine + H2O + H(+) = inosine + NH4(+). In terms of biological role, purine nucleoside enzyme that catalyzes the phosphorolysis of adenosine and inosine nucleosides, yielding D-ribose 1-phosphate and the respective free bases, adenine and hypoxanthine. Also catalyzes the phosphorolysis of S-methyl-5'-thioadenosine into adenine and S-methyl-5-thio-alpha-D-ribose 1-phosphate. Also has adenosine deaminase activity. This Bacillus subtilis (strain 168) protein is Purine nucleoside phosphorylase YlmD (ylmD).